Consider the following 702-residue polypeptide: Ferrioxamine B receptor (702 aa).

Positions 1-30 (MPLEMFMFATTRMALLIGGAIGGATFPLFA) are cleaved as a signal peptide. The region spanning 55–168 (PDIETPQSVS…PGGIVALTSR (114 aa)) is the TBDR plug domain. Residues 173 to 702 (DAGGEVKLFA…SIVGSVSWAF (530 aa)) form the TBDR beta-barrel domain.

It belongs to the TonB-dependent receptor family.

It is found in the cell outer membrane. Ferrioxamine binding and uptake, in association with the TonB protein. May play a role in intestinal colonization. This is Ferrioxamine B receptor (foxA) from Salmonella typhimurium (strain SL1344).